We begin with the raw amino-acid sequence, 172 residues long: Trypsin inhibitor DE-3 (172 aa).

2 disulfides stabilise this stretch: Cys-39–Cys-83 and Cys-132–Cys-139.

Belongs to the protease inhibitor I3 (leguminous Kunitz-type inhibitor) family.

In terms of biological role, inhibition of trypsin. The protein is Trypsin inhibitor DE-3 of Erythrina caffra (Kaffir tree).